We begin with the raw amino-acid sequence, 90 residues long: MTRLVFCRKYQQEMEGLDFAPFPGAKGQEFFDNVSKQAWQEWLQHQTTLINEKRLNVFEPEAKKFLEEQREKFFNNDASVEKAEGWKPEA.

This sequence belongs to the Fe(2+)-trafficking protein family.

Functionally, could be a mediator in iron transactions between iron acquisition and iron-requiring processes, such as synthesis and/or repair of Fe-S clusters in biosynthetic enzymes. The chain is Probable Fe(2+)-trafficking protein from Acinetobacter baylyi (strain ATCC 33305 / BD413 / ADP1).